A 424-amino-acid polypeptide reads, in one-letter code: Glutamate-1-semialdehyde 2,1-aminomutase (424 aa).

N6-(pyridoxal phosphate)lysine is present on lysine 266.

This sequence belongs to the class-III pyridoxal-phosphate-dependent aminotransferase family. HemL subfamily. Homodimer. Pyridoxal 5'-phosphate is required as a cofactor.

The protein localises to the cytoplasm. It catalyses the reaction (S)-4-amino-5-oxopentanoate = 5-aminolevulinate. The protein operates within porphyrin-containing compound metabolism; protoporphyrin-IX biosynthesis; 5-aminolevulinate from L-glutamyl-tRNA(Glu): step 2/2. The sequence is that of Glutamate-1-semialdehyde 2,1-aminomutase from Azoarcus sp. (strain BH72).